Consider the following 71-residue polypeptide: Brevinin-1CG4 (71 aa).

A signal peptide spans 1 to 22 (MFTLKKSLLLLFFLGTINLSLC). Residues 23 to 45 (EQERNADEEERRDDSDKRDVEVE) constitute a propeptide, removed in mature form. Cysteines 65 and 71 form a disulfide.

It belongs to the frog skin active peptide (FSAP) family. Brevinin subfamily. In terms of tissue distribution, expressed by the skin glands.

It is found in the secreted. Functionally, antimicrobial peptide active against a variety of Gram-positive and some Gram-negative bacterial strains. Has antifungal activity against C.albicans ATCC 10231 and a slime mold isolate. Has hemolytic activity against human erythrocytes. This Amolops chunganensis (Chungan torrent frog) protein is Brevinin-1CG4.